Consider the following 488-residue polypeptide: Homoserine O-acetyltransferase (488 aa).

One can recognise an AB hydrolase-1 domain in the interval 47-355 (NAILVCHALT…SYGHDAFLLE (309 aa)). The active-site Nucleophile is S153. Residue R222 participates in substrate binding. Active-site residues include D316 and H349. D350 serves as a coordination point for substrate. 2 CBS domains span residues 376–433 (MTEK…CSKL) and 437–488 (MTRD…RLIG).

This sequence belongs to the AB hydrolase superfamily. MetX family. Homodimer.

The protein localises to the cytoplasm. The catalysed reaction is L-homoserine + acetyl-CoA = O-acetyl-L-homoserine + CoA. Its pathway is amino-acid biosynthesis; L-methionine biosynthesis via de novo pathway; O-acetyl-L-homoserine from L-homoserine: step 1/1. In terms of biological role, transfers an acetyl group from acetyl-CoA to L-homoserine, forming acetyl-L-homoserine. The chain is Homoserine O-acetyltransferase from Methanococcoides burtonii (strain DSM 6242 / NBRC 107633 / OCM 468 / ACE-M).